A 129-amino-acid polypeptide reads, in one-letter code: Ribulose bisphosphate carboxylase small subunit (129 aa).

Belongs to the RuBisCO small chain family. As to quaternary structure, heterohexadecamer of 8 large and 8 small subunits.

Functionally, ruBisCO catalyzes two reactions: the carboxylation of D-ribulose 1,5-bisphosphate, the primary event in carbon dioxide fixation, as well as the oxidative fragmentation of the pentose substrate. Both reactions occur simultaneously and in competition at the same active site. Although the small subunit is not catalytic it is essential for maximal activity. This chain is Ribulose bisphosphate carboxylase small subunit, found in Cereibacter sphaeroides (Rhodobacter sphaeroides).